A 353-amino-acid polypeptide reads, in one-letter code: UDP-N-acetylglucosamine--N-acetylmuramyl-(pentapeptide) pyrophosphoryl-undecaprenol N-acetylglucosamine transferase (353 aa).

UDP-N-acetyl-alpha-D-glucosamine is bound by residues 15–17, N125, R165, S186, and Q286; that span reads TGG.

Belongs to the glycosyltransferase 28 family. MurG subfamily.

It localises to the cell inner membrane. The catalysed reaction is di-trans,octa-cis-undecaprenyl diphospho-N-acetyl-alpha-D-muramoyl-L-alanyl-D-glutamyl-meso-2,6-diaminopimeloyl-D-alanyl-D-alanine + UDP-N-acetyl-alpha-D-glucosamine = di-trans,octa-cis-undecaprenyl diphospho-[N-acetyl-alpha-D-glucosaminyl-(1-&gt;4)]-N-acetyl-alpha-D-muramoyl-L-alanyl-D-glutamyl-meso-2,6-diaminopimeloyl-D-alanyl-D-alanine + UDP + H(+). It functions in the pathway cell wall biogenesis; peptidoglycan biosynthesis. Its function is as follows. Cell wall formation. Catalyzes the transfer of a GlcNAc subunit on undecaprenyl-pyrophosphoryl-MurNAc-pentapeptide (lipid intermediate I) to form undecaprenyl-pyrophosphoryl-MurNAc-(pentapeptide)GlcNAc (lipid intermediate II). The protein is UDP-N-acetylglucosamine--N-acetylmuramyl-(pentapeptide) pyrophosphoryl-undecaprenol N-acetylglucosamine transferase of Chlamydia muridarum (strain MoPn / Nigg).